The sequence spans 273 residues: Large ribosomal subunit protein uL2 (273 aa).

2 disordered regions span residues 34–54 (LEKK…TRHI) and 223–273 (VAMN…RRRK).

It belongs to the universal ribosomal protein uL2 family. As to quaternary structure, part of the 50S ribosomal subunit. Forms a bridge to the 30S subunit in the 70S ribosome.

Its function is as follows. One of the primary rRNA binding proteins. Required for association of the 30S and 50S subunits to form the 70S ribosome, for tRNA binding and peptide bond formation. It has been suggested to have peptidyltransferase activity; this is somewhat controversial. Makes several contacts with the 16S rRNA in the 70S ribosome. This Pseudomonas aeruginosa (strain LESB58) protein is Large ribosomal subunit protein uL2.